A 408-amino-acid polypeptide reads, in one-letter code: Serine/threonine transporter SstT (408 aa).

10 consecutive transmembrane segments (helical) span residues 15 to 35 (MGLIPQITIGIIAGVLLAVIW), 49 to 69 (FISALKAVAPILVFALVTAAI), 85 to 105 (LLYVIGTLVAAVVAVIASFVF), 142 to 162 (ALMEGNFIAILAWAVGLGLML), 192 to 212 (PLGIFGLVANTLADAGIGALL), 218 to 238 (LAVIVGCMLFVALVTNPLIVF), 246 to 268 (YPLVFACLRGSAITAFFTRSSAA), 289 to 309 (ISIPLGATINMAGAAITISVI), 317 to 337 (LGIPVDFPTALLLCVVSSIAA), and 362 to 382 (TEVAMQVVAIGFVISVVQDST).

Belongs to the dicarboxylate/amino acid:cation symporter (DAACS) (TC 2.A.23) family.

The protein localises to the cell inner membrane. The enzyme catalyses L-serine(in) + Na(+)(in) = L-serine(out) + Na(+)(out). It catalyses the reaction L-threonine(in) + Na(+)(in) = L-threonine(out) + Na(+)(out). Its function is as follows. Involved in the import of serine and threonine into the cell, with the concomitant import of sodium (symport system). The polypeptide is Serine/threonine transporter SstT (Marinobacter nauticus (strain ATCC 700491 / DSM 11845 / VT8) (Marinobacter aquaeolei)).